The following is a 308-amino-acid chain: Probable 5-dehydro-4-deoxyglucarate dehydratase (308 aa).

The protein belongs to the DapA family.

The catalysed reaction is 5-dehydro-4-deoxy-D-glucarate + H(+) = 2,5-dioxopentanoate + CO2 + H2O. The protein operates within carbohydrate acid metabolism; D-glucarate degradation; 2,5-dioxopentanoate from D-glucarate: step 2/2. The protein is Probable 5-dehydro-4-deoxyglucarate dehydratase of Oceanobacillus iheyensis (strain DSM 14371 / CIP 107618 / JCM 11309 / KCTC 3954 / HTE831).